Reading from the N-terminus, the 177-residue chain is NAD(P)H-quinone oxidoreductase subunit 6, chloroplastic (177 aa).

5 helical membrane passes run 10–30 (ILVVFLGLVLILGGLGVVLFT), 33–53 (IYSAFSLGLVLICVSLFYILL), 61–81 (AQLLIYVGAINVLILFAVMFM), 92–112 (LWTVGDGVTSLVCTSILFLLI), and 152–172 (FFLPFELISIILLVALIGAIS).

It belongs to the complex I subunit 6 family. NDH is composed of at least 16 different subunits, 5 of which are encoded in the nucleus.

Its subcellular location is the plastid. It is found in the chloroplast thylakoid membrane. The enzyme catalyses a plastoquinone + NADH + (n+1) H(+)(in) = a plastoquinol + NAD(+) + n H(+)(out). The catalysed reaction is a plastoquinone + NADPH + (n+1) H(+)(in) = a plastoquinol + NADP(+) + n H(+)(out). NDH shuttles electrons from NAD(P)H:plastoquinone, via FMN and iron-sulfur (Fe-S) centers, to quinones in the photosynthetic chain and possibly in a chloroplast respiratory chain. The immediate electron acceptor for the enzyme in this species is believed to be plastoquinone. Couples the redox reaction to proton translocation, and thus conserves the redox energy in a proton gradient. The polypeptide is NAD(P)H-quinone oxidoreductase subunit 6, chloroplastic (ndhG) (Lemna minor (Common duckweed)).